Reading from the N-terminus, the 182-residue chain is Doublesex- and mab-3-related transcription factor C1 (182 aa).

T15 is subject to Phosphoserine. Polar residues predominate over residues 26–39 (AQVDTATQEESSQG). Disordered regions lie at residues 26–48 (AQVDTATQEESSQGPVLLNQHPE) and 136–174 (QTRHQPCGMPGTAGERGLQLANPSMPPRPTSSGSLPSGH).

Belongs to the DMRT family. In terms of tissue distribution, expressed in Sertoli cells in male testis.

The sequence is that of Doublesex- and mab-3-related transcription factor C1 (Dmrtc1) from Mus musculus (Mouse).